We begin with the raw amino-acid sequence, 29 residues long: Dermaseptin-1 (29 aa).

Position 29 is a valine amide (Val-29).

As to expression, expressed by the skin glands.

Its subcellular location is the secreted. In terms of biological role, antimicrobial peptide, active against the Gram-positive bacterium S.aureus, the Gram-negative bacteria E.coli and P.aeruginosa, and the yeasts C.albicans and P.brasiliensis. Has hemolytic activity (40% hemolysis at 128 ug/ml). This Phyllomedusa tarsius (Brownbelly leaf frog) protein is Dermaseptin-1.